The following is a 196-amino-acid chain: Large ribosomal subunit protein eL15 (196 aa).

The segment at 154 to 196 (PGHRGRSERGLTSAGVKGRGMRRRGKGTEKCRPSVRANANRAK) is disordered.

It belongs to the eukaryotic ribosomal protein eL15 family.

This chain is Large ribosomal subunit protein eL15, found in Methanospirillum hungatei JF-1 (strain ATCC 27890 / DSM 864 / NBRC 100397 / JF-1).